Reading from the N-terminus, the 358-residue chain is Prostaglandin E2 receptor EP2 subtype (358 aa).

Over 1–23 (MGNASNDSQSEDCETRQWLPPGE) the chain is Extracellular. Residues N3 and N6 are each glycosylated (N-linked (GlcNAc...) asparagine). A helical transmembrane segment spans residues 24-47 (SPAISSVMFSAGVLGNLIALALLA). Over 48 to 65 (RRWRGDVGCSAGRRSSLS) the chain is Cytoplasmic. A helical transmembrane segment spans residues 66–91 (LFHVLVTELVFTDLLGTCLISPVVLA). Residues 92–111 (SYARNQTLVALAPESRACTY) lie on the Extracellular side of the membrane. N-linked (GlcNAc...) asparagine glycosylation is present at N96. C109 and C187 are oxidised to a cystine. A helical membrane pass occupies residues 112–132 (FAFAMTFFSLATMLMLFAMAL). At 133-151 (ERYLSIGHPYFYQRRVSRS) the chain is on the cytoplasmic side. Residues 152–176 (GGLAVLPVIYAVSLLFCSLPLLDYG) form a helical membrane-spanning segment. Residues 177–198 (QYVQYCPGTWCFIRHGRTAYLQ) lie on the Extracellular side of the membrane. A helical membrane pass occupies residues 199 to 223 (LYATLLLLLIVSVLACNFSVILNLI). Over 224–262 (RMHRRSRRSRCGPSLGSGRGGPGARRRGERVSMAEETDH) the chain is Cytoplasmic. Residues 231 to 253 (RSRCGPSLGSGRGGPGARRRGER) form a disordered region. The helical transmembrane segment at 263–286 (LILLAIMTITFAVCSLPFTIFAYM) threads the bilayer. A glycan (N-linked (GlcNAc...) asparagine) is linked at N287. Residues 287–299 (NETSSRKEKWDLQ) lie on the Extracellular side of the membrane. Residues 300–323 (ALRFLSINSIIDPWVFAILRPPVL) form a helical membrane-spanning segment. The Cytoplasmic portion of the chain corresponds to 324 to 358 (RLMRSVLCCRISLRTQDATQTSCSTQSDASKQADL).

It belongs to the G-protein coupled receptor 1 family. In terms of tissue distribution, placenta and lung.

The protein localises to the cell membrane. Receptor for prostaglandin E2 (PGE2). The activity of this receptor is mediated by G(s) proteins that stimulate adenylate cyclase. The subsequent raise in intracellular cAMP is responsible for the relaxing effect of this receptor on smooth muscle. The chain is Prostaglandin E2 receptor EP2 subtype (PTGER2) from Homo sapiens (Human).